Here is a 156-residue protein sequence, read N- to C-terminus: 6,7-dimethyl-8-ribityllumazine synthase (156 aa).

Residues phenylalanine 22, 57 to 59 (AYE), and 81 to 83 (SVI) each bind 5-amino-6-(D-ribitylamino)uracil. Position 86–87 (86–87 (GT)) interacts with (2S)-2-hydroxy-3-oxobutyl phosphate. Residue histidine 89 is the Proton donor of the active site. Phenylalanine 114 provides a ligand contact to 5-amino-6-(D-ribitylamino)uracil. (2S)-2-hydroxy-3-oxobutyl phosphate is bound at residue arginine 128.

Belongs to the DMRL synthase family. In terms of assembly, forms an icosahedral capsid composed of 60 subunits, arranged as a dodecamer of pentamers.

It catalyses the reaction (2S)-2-hydroxy-3-oxobutyl phosphate + 5-amino-6-(D-ribitylamino)uracil = 6,7-dimethyl-8-(1-D-ribityl)lumazine + phosphate + 2 H2O + H(+). Its pathway is cofactor biosynthesis; riboflavin biosynthesis; riboflavin from 2-hydroxy-3-oxobutyl phosphate and 5-amino-6-(D-ribitylamino)uracil: step 1/2. Catalyzes the formation of 6,7-dimethyl-8-ribityllumazine by condensation of 5-amino-6-(D-ribitylamino)uracil with 3,4-dihydroxy-2-butanone 4-phosphate. This is the penultimate step in the biosynthesis of riboflavin. This chain is 6,7-dimethyl-8-ribityllumazine synthase, found in Photobacterium profundum (strain SS9).